Reading from the N-terminus, the 431-residue chain is Beta-lactamase hydrolase-like protein (431 aa).

Positions 212, 214, and 286 each coordinate Zn(2+). Asp309 provides a ligand contact to substrate.

The protein belongs to the metallo-beta-lactamase superfamily. It depends on Zn(2+) as a cofactor.

Its function is as follows. Could play a role in cell adherence or biofilm development. The chain is Beta-lactamase hydrolase-like protein from Xylella fastidiosa (strain Temecula1 / ATCC 700964).